The sequence spans 559 residues: Acetolactate synthase, catabolic (559 aa).

FAD contacts are provided by residues Arg159, Phe263 to Ser284, and Asp304 to Asp323. Position 447 (Asp447) interacts with Mg(2+).

This sequence belongs to the TPP enzyme family. In terms of assembly, homodimer.

It carries out the reaction 2 pyruvate + H(+) = (2S)-2-acetolactate + CO2. It participates in polyol metabolism; (R,R)-butane-2,3-diol biosynthesis; (R,R)-butane-2,3-diol from pyruvate: step 1/3. The protein is Acetolactate synthase, catabolic (budB) of Raoultella terrigena (Klebsiella terrigena).